Here is a 359-residue protein sequence, read N- to C-terminus: 3-dehydroquinate synthase (359 aa).

Residues 69–74 (SGESSK), 103–107 (GVVGD), 127–128 (TT), Lys-139, Lys-148, and 166–169 (TLST) each bind NAD(+). Zn(2+) contacts are provided by Glu-181, His-242, and His-259.

It belongs to the sugar phosphate cyclases superfamily. Dehydroquinate synthase family. The cofactor is NAD(+). Co(2+) is required as a cofactor. Zn(2+) serves as cofactor.

It is found in the cytoplasm. The catalysed reaction is 7-phospho-2-dehydro-3-deoxy-D-arabino-heptonate = 3-dehydroquinate + phosphate. It participates in metabolic intermediate biosynthesis; chorismate biosynthesis; chorismate from D-erythrose 4-phosphate and phosphoenolpyruvate: step 2/7. Its function is as follows. Catalyzes the conversion of 3-deoxy-D-arabino-heptulosonate 7-phosphate (DAHP) to dehydroquinate (DHQ). In Oceanobacillus iheyensis (strain DSM 14371 / CIP 107618 / JCM 11309 / KCTC 3954 / HTE831), this protein is 3-dehydroquinate synthase.